The sequence spans 238 residues: Gem-associated protein 8 (238 aa).

Positions 66–127 (AGHPWDSQGQ…LESDSDDEVE (62 aa)) are disordered. 2 stretches are compositionally biased toward polar residues: residues 72–82 (SQGQHMAQQES) and 96–108 (LRNS…STRG). Acidic residues predominate over residues 113–127 (CEEEELESDSDDEVE). Phosphoserine is present on serine 122. Residues 131–164 (SNMEITEELRQYFAQTERHREERRRQQQLDAERL) are a coiled coil.

In terms of assembly, part of the core SMN complex that contains SMN1, GEMIN2/SIP1, DDX20/GEMIN3, GEMIN4, GEMIN5, GEMIN6, GEMIN7, GEMIN8 and STRAP/UNRIP. Part of the SMN-Sm complex that contains SMN1, GEMIN2/SIP1, DDX20/GEMIN3, GEMIN4, GEMIN5, GEMIN6, GEMIN7, GEMIN8, STRAP/UNRIP and the Sm proteins SNRPB, SNRPD1, SNRPD2, SNRPD3, SNRPE, SNRPF and SNRPG. Interacts with GEMIN6; the interaction is direct. Interacts with GEMIN7; the interaction is direct. Interacts with SMN1; the interaction is direct. Interacts with GEMIN4; the interaction is direct. In terms of tissue distribution, widely expressed in embryonic tissues (at protein level).

It localises to the nucleus. It is found in the gem. The protein localises to the cytoplasm. The SMN complex catalyzes the assembly of small nuclear ribonucleoproteins (snRNPs), the building blocks of the spliceosome, and thereby plays an important role in the splicing of cellular pre-mRNAs. Most spliceosomal snRNPs contain a common set of Sm proteins SNRPB, SNRPD1, SNRPD2, SNRPD3, SNRPE, SNRPF and SNRPG that assemble in a heptameric protein ring on the Sm site of the small nuclear RNA to form the core snRNP (Sm core). In the cytosol, the Sm proteins SNRPD1, SNRPD2, SNRPE, SNRPF and SNRPG are trapped in an inactive 6S pICln-Sm complex by the chaperone CLNS1A that controls the assembly of the core snRNP. To assemble core snRNPs, the SMN complex accepts the trapped 5Sm proteins from CLNS1A forming an intermediate. Binding of snRNA inside 5Sm triggers eviction of the SMN complex, thereby allowing binding of SNRPD3 and SNRPB to complete assembly of the core snRNP. The protein is Gem-associated protein 8 (Gemin8) of Mus musculus (Mouse).